The chain runs to 114 residues: Gonadotropin subunit beta-1 (114 aa).

Residues 1-19 (MQLVLMAAVLALAEVGCFG) form the signal peptide. 6 disulfide bridges follow: C20-C66, C32-C80, C37-C114, C43-C92, C47-C94, and C97-C104. The N-linked (GlcNAc...) asparagine glycan is linked to N24.

Belongs to the glycoprotein hormones subunit beta family. Heterodimer of an alpha and a beta chain.

The protein localises to the secreted. In terms of biological role, involved in gametogenesis and steroidogenesis. In Fundulus heteroclitus (Killifish), this protein is Gonadotropin subunit beta-1 (cgba).